Consider the following 246-residue polypeptide: MAEFSADLCLFDLDGTIVSTTVAAEKAWTKLCYEYGVDPSELFKHSHGARTQEVLRRFFPKLDDTDNKGVLALEKDIAHSYLDTVSLIPGAENLLLSLDVDTETQKKLPERKWAIVTSGSPYLAFSWFETILKNVGKPKVFITGFDVKNGKPDPEGYSRARDLLRQDLQLTGKQDLKYVVFEDAPVGIKAGKAMGAITVGITSSYDKSVLFDAGADYVVCDLTQVSVVKNNENGIVIQVNNPLTRA.

Catalysis depends on Asp-83, which acts as the Nucleophile. Asp-83 is a binding site for Mg(2+). Substrate-binding positions include Asp-83, Glu-92, and 146–149 (DVKN). Mg(2+) is bound at residue Asp-183.

It belongs to the HAD-like hydrolase superfamily. DOG/GPP family. It depends on Mg(2+) as a cofactor.

The enzyme catalyses 2-deoxy-D-glucose 6-phosphate + H2O = 2-deoxy-D-glucose + phosphate. Phosphatase that is active on 2-deoxy-D-glucose 6-phosphate (2-DOG-6P), as well as on fructose-1-P. The protein is 2-deoxyglucose-6-phosphate phosphatase 1 of Saccharomyces cerevisiae (strain ATCC 204508 / S288c) (Baker's yeast).